The following is a 215-amino-acid chain: Adenylate kinase (215 aa).

10–15 provides a ligand contact to ATP; it reads GAGKGT. Residues 30 to 59 form an NMP region; it reads STGDMLRAAVKAGTELGLKAKSVMDAGNLV. AMP contacts are provided by residues T31, R36, 57–59, 85–88, and Q92; these read NLV and GFPR. Residues 122 to 159 form an LID region; that stretch reads GRRVHEGSGRIYHTIFNPPKVEGVDDVTGESLVQRKDD. ATP-binding positions include R123 and 132–133; that span reads IY. The AMP site is built by R156 and R167. ATP is bound at residue G201.

The protein belongs to the adenylate kinase family. Monomer.

The protein resides in the cytoplasm. The enzyme catalyses AMP + ATP = 2 ADP. It participates in purine metabolism; AMP biosynthesis via salvage pathway; AMP from ADP: step 1/1. Functionally, catalyzes the reversible transfer of the terminal phosphate group between ATP and AMP. Plays an important role in cellular energy homeostasis and in adenine nucleotide metabolism. The polypeptide is Adenylate kinase (Pseudomonas syringae pv. tomato (strain ATCC BAA-871 / DC3000)).